Reading from the N-terminus, the 243-residue chain is MRPLLVLLLLGLAAGSPPLDDNKIPSLCPGHPGLPGTPGHHGSQGLPGRDGRDGRDGAPGAPGEKGEGGRPGLPGPRGDPGPRGEAGPAGPTGPAGECSVPPRSAFSAKRSESRVPPPSDAPLPFDRVLVNEQGHYDAVTGKFTCQVPGVYYFAVHATVYRASLQFDLVKNGESIASFFQFFGGWPKPASLSGGAMVRLEPEDQVWVQVGVGDYIGIYASIKTDSTFSGFLVYSDWHSSPVFA.

Positions 1-15 are cleaved as a signal peptide; that stretch reads MRPLLVLLLLGLAAG. The segment at 15-125 is disordered; it reads GSPPLDDNKI…PPPSDAPLPF (111 aa). Positions 30–95 constitute a Collagen-like domain; sequence GHPGLPGTPG…AGPAGPTGPA (66 aa). The segment covering 83–96 has biased composition (low complexity); that stretch reads RGEAGPAGPTGPAG. In terms of domain architecture, C1q spans 99–238; sequence SVPPRSAFSA…GFLVYSDWHS (140 aa).

May interact with ERFE. Homotrimer (via collagen-like domain). May form higher order oligomers by supercoiling of the trimers.

It localises to the secreted. This Homo sapiens (Human) protein is Complement C1q tumor necrosis factor-related protein 5 (C1QTNF5).